A 102-amino-acid polypeptide reads, in one-letter code: Co-chaperonin GroES (102 aa).

The protein belongs to the GroES chaperonin family. As to quaternary structure, heptamer of 7 subunits arranged in a ring. Interacts with the chaperonin GroEL.

It localises to the cytoplasm. Functionally, together with the chaperonin GroEL, plays an essential role in assisting protein folding. The GroEL-GroES system forms a nano-cage that allows encapsulation of the non-native substrate proteins and provides a physical environment optimized to promote and accelerate protein folding. GroES binds to the apical surface of the GroEL ring, thereby capping the opening of the GroEL channel. This Anabaena sp. (strain L31) protein is Co-chaperonin GroES.